The sequence spans 202 residues: Tetranectin (202 aa).

The first 21 residues, 1 to 21, serve as a signal peptide directing secretion; it reads MGFWGTYLLFCLFSFLSQLTA. 3 disulfides stabilise this stretch: cysteine 71/cysteine 81, cysteine 98/cysteine 197, and cysteine 173/cysteine 189. The 122-residue stretch at 77 to 198 folds into the C-type lectin domain; the sequence is VNLKCLLAFT…CRDQLPYICQ (122 aa).

As to quaternary structure, homotrimer. Highest expression in lung, skeletal muscle and heart. Expressed in retina.

The protein localises to the secreted. Functionally, tetranectin binds to plasminogen and to isolated kringle 4. May be involved in the packaging of molecules destined for exocytosis. Plays a role in retinal function. This chain is Tetranectin (Clec3b), found in Mus musculus (Mouse).